A 685-amino-acid polypeptide reads, in one-letter code: A-type ATP synthase subunit I (685 aa).

The next 7 membrane-spanning stretches (helical) occupy residues 172–192, 348–368, 394–414, 464–484, 538–558, 604–624, and 626–646; these read VGGLAAVEASGGSVVVAVAVP, EIVPTVFLAITLPLTFALMFP, VIAVMGGASVVSGLLAGEVFG, LFMGAFMLSFGTFLGVVNGVI, LVLAGSVLGLAWMLLAGPIIY, MFVIYYLTVMIMQGGILADVV, and ALLYVGGNLAVAAMEGLLAFA.

This sequence belongs to the V-ATPase 116 kDa subunit family. As to quaternary structure, has multiple subunits with at least A(3), B(3), C, D, E, F, H, I and proteolipid K(x).

It is found in the cell membrane. Functionally, component of the A-type ATP synthase that produces ATP from ADP in the presence of a proton gradient across the membrane. This chain is A-type ATP synthase subunit I, found in Aeropyrum pernix (strain ATCC 700893 / DSM 11879 / JCM 9820 / NBRC 100138 / K1).